Reading from the N-terminus, the 222-residue chain is ATP-dependent dethiobiotin synthetase BioD (222 aa).

12-17 is an ATP binding site; sequence DVGKTI. Thr16 lines the Mg(2+) pocket. Lys37 is an active-site residue. Thr41 is a substrate binding site. ATP-binding positions include Asp49, 107–110, 167–168, and 197–199; these read EGAG, GS, and AEG. Residues Asp49 and Glu107 each contribute to the Mg(2+) site.

Belongs to the dethiobiotin synthetase family. Homodimer. Mg(2+) is required as a cofactor.

The protein resides in the cytoplasm. It catalyses the reaction (7R,8S)-7,8-diammoniononanoate + CO2 + ATP = (4R,5S)-dethiobiotin + ADP + phosphate + 3 H(+). It participates in cofactor biosynthesis; biotin biosynthesis; biotin from 7,8-diaminononanoate: step 1/2. Catalyzes a mechanistically unusual reaction, the ATP-dependent insertion of CO2 between the N7 and N8 nitrogen atoms of 7,8-diaminopelargonic acid (DAPA, also called 7,8-diammoniononanoate) to form a ureido ring. This chain is ATP-dependent dethiobiotin synthetase BioD, found in Corynebacterium diphtheriae (strain ATCC 700971 / NCTC 13129 / Biotype gravis).